The chain runs to 361 residues: Peptide chain release factor 1 (361 aa).

Gln-237 carries the post-translational modification N5-methylglutamine. The disordered stretch occupies residues 287–306; that stretch reads KRAAEEASTRKSLVGSGDRS.

It belongs to the prokaryotic/mitochondrial release factor family. Methylated by PrmC. Methylation increases the termination efficiency of RF1.

It localises to the cytoplasm. Peptide chain release factor 1 directs the termination of translation in response to the peptide chain termination codons UAG and UAA. The sequence is that of Peptide chain release factor 1 from Alteromonas mediterranea (strain DSM 17117 / CIP 110805 / LMG 28347 / Deep ecotype).